Reading from the N-terminus, the 278-residue chain is 4-diphosphocytidyl-2-C-methyl-D-erythritol kinase (278 aa).

The active site involves K9. Residue 89–99 (PVASGIGGGSA) participates in ATP binding. The active site involves D128.

This sequence belongs to the GHMP kinase family. IspE subfamily.

It catalyses the reaction 4-CDP-2-C-methyl-D-erythritol + ATP = 4-CDP-2-C-methyl-D-erythritol 2-phosphate + ADP + H(+). Its pathway is isoprenoid biosynthesis; isopentenyl diphosphate biosynthesis via DXP pathway; isopentenyl diphosphate from 1-deoxy-D-xylulose 5-phosphate: step 3/6. Catalyzes the phosphorylation of the position 2 hydroxy group of 4-diphosphocytidyl-2C-methyl-D-erythritol. The protein is 4-diphosphocytidyl-2-C-methyl-D-erythritol kinase of Cereibacter sphaeroides (strain ATCC 17029 / ATH 2.4.9) (Rhodobacter sphaeroides).